The chain runs to 911 residues: ATP-dependent DNA helicase Q-like 5 (911 aa).

The segment at 1–84 is disordered; it reads MDFDSDSDGS…PPPSPLFTNL (84 aa). Low complexity predominate over residues 20–48; it reads SFPSSPPQLQSPAKHVPPVSRKMTSSSSR. Residues 54–79 show a composition bias toward pro residues; sequence PTHPPPNPSQEAPVPSPYPPPPPPSP. The Helicase ATP-binding domain occupies 278–448; the sequence is IKMILGGSST…MSSLEIPSTN (171 aa). Residue 291–298 participates in ATP binding; sequence LPTGAGKS. A DEAH box motif is present at residues 390–393; the sequence is DEAH. Positions 470–628 constitute a Helicase C-terminal domain; it reads RMKDLLILME…VFSTETKQHE (159 aa).

It belongs to the helicase family. RecQ subfamily. Mostly expressed in roots, seedlings, shoots, shoot apical mersitem, flowers, and siliques.

Its subcellular location is the nucleus. The catalysed reaction is Couples ATP hydrolysis with the unwinding of duplex DNA by translocating in the 3'-5' direction.. It carries out the reaction ATP + H2O = ADP + phosphate + H(+). In terms of biological role, 3'-5' DNA helicase that may play a role in the repair of DNA. This chain is ATP-dependent DNA helicase Q-like 5 (RECQL5), found in Arabidopsis thaliana (Mouse-ear cress).